The chain runs to 99 residues: MMDVDRSIRVAVDTGDVTLGSEKSIQSLKLGKGQLVIVAANTPKDIVEDVEYYTNLSDIPSYTYEGSSVELGSVCGKPFTVATLIVNDPGDSTILDDLR.

This sequence belongs to the eukaryotic ribosomal protein eL30 family.

This chain is Large ribosomal subunit protein eL30, found in Methanobrevibacter smithii (strain ATCC 35061 / DSM 861 / OCM 144 / PS).